A 224-amino-acid polypeptide reads, in one-letter code: Deoxyribose-phosphate aldolase (224 aa).

The active-site Proton donor/acceptor is D92. K155 acts as the Schiff-base intermediate with acetaldehyde in catalysis. The active-site Proton donor/acceptor is the K184.

The protein belongs to the DeoC/FbaB aldolase family. DeoC type 1 subfamily.

It localises to the cytoplasm. The enzyme catalyses 2-deoxy-D-ribose 5-phosphate = D-glyceraldehyde 3-phosphate + acetaldehyde. The protein operates within carbohydrate degradation; 2-deoxy-D-ribose 1-phosphate degradation; D-glyceraldehyde 3-phosphate and acetaldehyde from 2-deoxy-alpha-D-ribose 1-phosphate: step 2/2. Catalyzes a reversible aldol reaction between acetaldehyde and D-glyceraldehyde 3-phosphate to generate 2-deoxy-D-ribose 5-phosphate. This Clostridium perfringens (strain SM101 / Type A) protein is Deoxyribose-phosphate aldolase.